We begin with the raw amino-acid sequence, 498 residues long: Transcription factor kayak (498 aa).

Positions 108 to 127 are enriched in polar residues; it reads ASLGQGSESEDSNASYNDTQ. 2 disordered regions span residues 108 to 144 and 177 to 234; these read ASLG…HTDS and GSAS…KRRV. Composition is skewed to low complexity over residues 135-144 and 177-191; these read TDTSSAHTDS and GSAS…TSNT. Residues 212–275 form the bZIP domain; that stretch reads EQKRAVRRER…KQLEYLLATH (64 aa). The basic motif stretch occupies residues 214 to 233; that stretch reads KRAVRRERNKQAAARCRKRR. The leucine-zipper stretch occupies residues 240–247; that stretch reads LTEEVEQL. Residues 304-325 are compositionally biased toward low complexity; the sequence is AGSSGSGASSHHNHNSNDSSNG. 2 disordered regions span residues 304-345 and 465-498; these read AGSS…SPLD and TPVS…LVSL. Over residues 333 to 343 the composition is skewed to polar residues; that stretch reads TLNSTGRSNSP. Serine 342 carries the phosphoserine modification.

Belongs to the bZIP family. Fos subfamily. As to quaternary structure, homodimer. Heterodimer with Jra. The kay-Jra heterodimer binds more stably to the AP-1 site than either of the two proteins alone.

It is found in the nucleus. In terms of biological role, developmentally regulated transcription factor AP-1 binds and recognizes the enhancer DNA sequence: 5'-TGA[CG]TCA-3'. May play a role in the function or determination of a particular subset of cells in the developing embryo. It is able to carry out its function either independently of or in conjunction with Jra. The sequence is that of Transcription factor kayak from Drosophila simulans (Fruit fly).